A 238-amino-acid polypeptide reads, in one-letter code: Pyridoxine 5'-phosphate synthase (238 aa).

A 3-amino-2-oxopropyl phosphate-binding site is contributed by N7. Residue 9–10 coordinates 1-deoxy-D-xylulose 5-phosphate; that stretch reads DH. R18 lines the 3-amino-2-oxopropyl phosphate pocket. The Proton acceptor role is filled by H43. Residues R45 and H50 each contribute to the 1-deoxy-D-xylulose 5-phosphate site. The active-site Proton acceptor is the E70. T100 lines the 1-deoxy-D-xylulose 5-phosphate pocket. H190 (proton donor) is an active-site residue. 3-amino-2-oxopropyl phosphate is bound by residues G191 and 212-213; that span reads GH.

It belongs to the PNP synthase family. Homooctamer; tetramer of dimers.

It localises to the cytoplasm. The catalysed reaction is 3-amino-2-oxopropyl phosphate + 1-deoxy-D-xylulose 5-phosphate = pyridoxine 5'-phosphate + phosphate + 2 H2O + H(+). Its pathway is cofactor biosynthesis; pyridoxine 5'-phosphate biosynthesis; pyridoxine 5'-phosphate from D-erythrose 4-phosphate: step 5/5. In terms of biological role, catalyzes the complicated ring closure reaction between the two acyclic compounds 1-deoxy-D-xylulose-5-phosphate (DXP) and 3-amino-2-oxopropyl phosphate (1-amino-acetone-3-phosphate or AAP) to form pyridoxine 5'-phosphate (PNP) and inorganic phosphate. This chain is Pyridoxine 5'-phosphate synthase, found in Prochlorococcus marinus (strain MIT 9312).